Consider the following 252-residue polypeptide: Trans-aconitate 2-methyltransferase (252 aa).

The protein belongs to the methyltransferase superfamily. Tam family.

It localises to the cytoplasm. The catalysed reaction is trans-aconitate + S-adenosyl-L-methionine = (E)-3-(methoxycarbonyl)pent-2-enedioate + S-adenosyl-L-homocysteine. Catalyzes the S-adenosylmethionine monomethyl esterification of trans-aconitate. The sequence is that of Trans-aconitate 2-methyltransferase from Escherichia fergusonii (strain ATCC 35469 / DSM 13698 / CCUG 18766 / IAM 14443 / JCM 21226 / LMG 7866 / NBRC 102419 / NCTC 12128 / CDC 0568-73).